A 139-amino-acid chain; its full sequence is uncharacterized protein (139 aa).

The segment at 1 to 26 is disordered; it reads MQLVREKRGAHQHVPRKTTEPQKVRG. Residues 17–26 show a composition bias toward basic and acidic residues; sequence KTTEPQKVRG.

This is an uncharacterized protein from Ictalurid herpesvirus 1 (strain Auburn) (IcHV-1).